The primary structure comprises 362 residues: MIIDRVEVETINSFSKLELLKEVYGLISILPILTLLLGITIEVLVIVWLEREISASIQQRIGPEYAGPLGLLQAIADGTKLLLKEDILPSRGDIPLFSIGPSIAVISILLSFLVIPLGYHFVLADLSIGVFLWIAISSIAPIGLLMAGYSSNNKYSFLGGLRAAAQSISYEIPLTFCVLAISLLSNSSSTVDIVEAQSKYGFFGWNIWRQPIGFLVFLISSLAECERLPFDLPEAEEELVAGYQTEYSGIKYGLFYLVSYLNLLVSSLFVTVLYLGGWNLSIPYISFFDFFQMNNAVGILEMTIGIFITLTKAYLFLFISITIRWTLPRMRMDQLLNLGWKFLLPISLGNLLLTTSSQLVSL.

8 helical membrane passes run 29-49 (ILPI…IVWL), 103-123 (IAVI…HFVL), 128-148 (IGVF…LMAG), 164-184 (AAQS…ISLL), 202-222 (FFGW…ISSL), 247-267 (YSGI…LVSS), 303-323 (TIGI…SITI), and 335-355 (LLNL…LLTT).

This sequence belongs to the complex I subunit 1 family. As to quaternary structure, NDH is composed of at least 16 different subunits, 5 of which are encoded in the nucleus.

Its subcellular location is the plastid. It is found in the chloroplast thylakoid membrane. It catalyses the reaction a plastoquinone + NADH + (n+1) H(+)(in) = a plastoquinol + NAD(+) + n H(+)(out). It carries out the reaction a plastoquinone + NADPH + (n+1) H(+)(in) = a plastoquinol + NADP(+) + n H(+)(out). Functionally, NDH shuttles electrons from NAD(P)H:plastoquinone, via FMN and iron-sulfur (Fe-S) centers, to quinones in the photosynthetic chain and possibly in a chloroplast respiratory chain. The immediate electron acceptor for the enzyme in this species is believed to be plastoquinone. Couples the redox reaction to proton translocation, and thus conserves the redox energy in a proton gradient. This Agrostis stolonifera (Creeping bentgrass) protein is NAD(P)H-quinone oxidoreductase subunit 1, chloroplastic.